Here is a 426-residue protein sequence, read N- to C-terminus: Phosphomethylpyrimidine synthase (426 aa).

Substrate contacts are provided by residues asparagine 65, methionine 94, tyrosine 123, histidine 162, 184–186 (SRG), 225–228 (DGMR), and glutamate 264. Zn(2+) is bound at residue histidine 268. A substrate-binding site is contributed by tyrosine 291. Position 332 (histidine 332) interacts with Zn(2+). Residues cysteine 408, cysteine 411, and cysteine 415 each coordinate [4Fe-4S] cluster.

It belongs to the ThiC family. It depends on [4Fe-4S] cluster as a cofactor.

It catalyses the reaction 5-amino-1-(5-phospho-beta-D-ribosyl)imidazole + S-adenosyl-L-methionine = 4-amino-2-methyl-5-(phosphooxymethyl)pyrimidine + CO + 5'-deoxyadenosine + formate + L-methionine + 3 H(+). The protein operates within cofactor biosynthesis; thiamine diphosphate biosynthesis. In terms of biological role, catalyzes the synthesis of the hydroxymethylpyrimidine phosphate (HMP-P) moiety of thiamine from aminoimidazole ribotide (AIR) in a radical S-adenosyl-L-methionine (SAM)-dependent reaction. The chain is Phosphomethylpyrimidine synthase from Methanocaldococcus jannaschii (strain ATCC 43067 / DSM 2661 / JAL-1 / JCM 10045 / NBRC 100440) (Methanococcus jannaschii).